Here is a 95-residue protein sequence, read N- to C-terminus: Co-chaperonin GroES (95 aa).

Belongs to the GroES chaperonin family. In terms of assembly, heptamer of 7 subunits arranged in a ring. Interacts with the chaperonin GroEL.

Its subcellular location is the cytoplasm. Together with the chaperonin GroEL, plays an essential role in assisting protein folding. The GroEL-GroES system forms a nano-cage that allows encapsulation of the non-native substrate proteins and provides a physical environment optimized to promote and accelerate protein folding. GroES binds to the apical surface of the GroEL ring, thereby capping the opening of the GroEL channel. The protein is Co-chaperonin GroES of Stenotrophomonas maltophilia (strain R551-3).